The following is a 139-amino-acid chain: Glutamate mutase sigma subunit (139 aa).

The region spanning 4–139 (KIKLVLGVIG…DLHADFPDHA (136 aa)) is the B12-binding domain. Adenosylcob(III)alamin is bound by residues 14–18 (SDCHA), His17, 62–64 (SSL), and 94–98 (NIVVG).

The protein belongs to the methylaspartate mutase GlmS subunit family. Heterotetramer composed of 2 epsilon subunits (GlmE) and 2 sigma subunits (GlmS). GlmE exists as a homodimer and GlmS as a monomer. It depends on adenosylcob(III)alamin as a cofactor.

The catalysed reaction is (2S,3S)-3-methyl-L-aspartate = L-glutamate. It functions in the pathway amino-acid degradation; L-glutamate degradation via mesaconate pathway; acetate and pyruvate from L-glutamate: step 1/4. Catalyzes the carbon skeleton rearrangement of L-glutamate to L-threo-3-methylaspartate ((2S,3S)-3-methylaspartate). This chain is Glutamate mutase sigma subunit, found in Treponema denticola (strain ATCC 35405 / DSM 14222 / CIP 103919 / JCM 8153 / KCTC 15104).